Here is a 513-residue protein sequence, read N- to C-terminus: ATP synthase subunit alpha (513 aa).

169 to 176 (GDRQTGKT) contacts ATP.

Belongs to the ATPase alpha/beta chains family. As to quaternary structure, F-type ATPases have 2 components, CF(1) - the catalytic core - and CF(0) - the membrane proton channel. CF(1) has five subunits: alpha(3), beta(3), gamma(1), delta(1), epsilon(1). CF(0) has three main subunits: a(1), b(2) and c(9-12). The alpha and beta chains form an alternating ring which encloses part of the gamma chain. CF(1) is attached to CF(0) by a central stalk formed by the gamma and epsilon chains, while a peripheral stalk is formed by the delta and b chains.

Its subcellular location is the cell inner membrane. It carries out the reaction ATP + H2O + 4 H(+)(in) = ADP + phosphate + 5 H(+)(out). In terms of biological role, produces ATP from ADP in the presence of a proton gradient across the membrane. The alpha chain is a regulatory subunit. The protein is ATP synthase subunit alpha of Shewanella loihica (strain ATCC BAA-1088 / PV-4).